The following is a 620-amino-acid chain: Membrane protein insertase YidC (620 aa).

A helical transmembrane segment spans residues 7 to 27; the sequence is NYLIAIALSVMVVLGWQFFYM. Over residues 37–58 the composition is skewed to low complexity; the sequence is AEQAQQAQQAKTPATQATPGAA. Positions 37–77 are disordered; sequence AEQAQQAQQAKTPATQATPGAAVNGALPGQTQASATTSRED. The next 4 helical transmembrane spans lie at 399 to 419, 469 to 489, 514 to 534, and 560 to 580; these read FGVAILLTTIAVKLLFFPLAS, WPLLLQIPVFFALYKVIYITI, LFGLLPFESPAMLHLGIWPII, and WMPLVFTFMLGSFPAGLVIYW.

The protein belongs to the OXA1/ALB3/YidC family. Type 1 subfamily. Interacts with the Sec translocase complex via SecD. Specifically interacts with transmembrane segments of nascent integral membrane proteins during membrane integration.

The protein resides in the cell inner membrane. Functionally, required for the insertion and/or proper folding and/or complex formation of integral membrane proteins into the membrane. Involved in integration of membrane proteins that insert both dependently and independently of the Sec translocase complex, as well as at least some lipoproteins. Aids folding of multispanning membrane proteins. The polypeptide is Membrane protein insertase YidC (Allorhizobium ampelinum (strain ATCC BAA-846 / DSM 112012 / S4) (Agrobacterium vitis (strain S4))).